The sequence spans 348 residues: Cyclic AMP-dependent transcription factor ATF-4 (348 aa).

Lys53 participates in a covalent cross-link: Glycyl lysine isopeptide (Lys-Gly) (interchain with G-Cter in SUMO2). 2 disordered regions span residues 151–174 (QGAP…TPDH) and 187–265 (PEGD…GEKM). Phosphoserine occurs at positions 211, 215, 220, 227, and 231. Positions 211-220 (SDNDSGICMS) match the BetaTrCP degron motif motif. Over residues 221-241 (PDSSLGSPQDSPSTSRGSPNK) the composition is skewed to polar residues. 4-hydroxyproline is present on Pro232. Phosphoserine is present on residues Ser242 and Ser245. The segment covering 242–253 (SLLSPGALSGSS) has biased composition (low complexity). Residues Lys256, Lys264, and Lys269 each participate in a glycyl lysine isopeptide (Lys-Gly) (interchain with G-Cter in SUMO2) cross-link. The bZIP domain occupies 275–338 (LDKKLKKMEQ…QYLKDQIEEV (64 aa)). The basic motif stretch occupies residues 277–297 (KKLKKMEQNKTAATRYRQKKR). Positions 302 to 338 (ALTGECKELEKKNEALKEKADSLAKEIQYLKDQIEEV) are interaction with GABBR1. Positions 303–331 (LTGECKELEKKNEALKEKADSLAKEIQYL) are leucine-zipper. Position 308 is an N6-acetyllysine (Lys308).

Belongs to the bZIP family. In terms of assembly, binds DNA as a homodimer and as a heterodimer. Heterodimer; heterodimerizes with CEBPB. Heterodimer; heterodimerizes with DDIT3/CHOP. Interacts with CEP290 (via an N-terminal region). Interacts with NEK6, DAPK2 (isoform 2) and ZIPK/DAPK3. Interacts (via its leucine zipper domain) with GABBR1 and GABBR2 (via their C-termini). Forms a heterodimer with TXLNG in osteoblasts. Interacts (via its DNA binding domain) with FOXO1 (C-terminal half); the interaction occurs in osteoblasts and regulates glucose homeostasis through suppression of beta-cell proliferation and a decrease in insulin production. Interacts with SATB2; the interaction results in enhanced DNA binding and transactivation by these transcription factors. Interacts with ABRAXAS2. Interacts with TRIB3, inhibiting the transactivation activity of ATF4. Interacts with DISC1; which inhibits ATF4 transcription factor activity by disrupting ATF4 dimerization and DNA-binding. Interacts with EP300/p300; EP300/p300 stabilizes ATF4 and increases its transcriptional activity independently of its catalytic activity by preventing its ubiquitination. Post-translationally, ubiquitinated by SCF(BTRC) in response to mTORC1 signal, followed by proteasomal degradation and leading to down-regulate expression of SIRT4. Interaction with EP300/p300 inhibits ubiquitination by SCF(BTRC). In terms of processing, phosphorylation at Ser-242 by RPS6KA3/RSK2 in osteoblasts enhances transactivation activity and promotes osteoblast differentiation. Phosphorylated on the betaTrCP degron motif at Ser-215, followed by phosphorylation at Ser-220, Ser-227, Ser-231 and Ser-245, promoting interaction with BTRC and ubiquitination. Phosphorylation is promoted by mTORC1. Phosphorylation at Ser-211 by CK2 decreases its stability. Phosphorylated by NEK6. Hydroxylated by PHD3, leading to decreased protein stability.

It is found in the nucleus. Its subcellular location is the nucleus speckle. It localises to the cytoplasm. The protein resides in the cell membrane. The protein localises to the cytoskeleton. It is found in the microtubule organizing center. Its subcellular location is the centrosome. In terms of biological role, transcription factor that binds the cAMP response element (CRE) (consensus: 5'-GTGACGT[AC][AG]-3') and displays two biological functions, as regulator of metabolic and redox processes under normal cellular conditions, and as master transcription factor during integrated stress response (ISR). Binds to asymmetric CRE's as a heterodimer and to palindromic CRE's as a homodimer. Core effector of the ISR, which is required for adaptation to various stress such as endoplasmic reticulum (ER) stress, amino acid starvation, mitochondrial stress or oxidative stress. During ISR, ATF4 translation is induced via an alternative ribosome translation re-initiation mechanism in response to EIF2S1/eIF-2-alpha phosphorylation, and stress-induced ATF4 acts as a master transcription factor of stress-responsive genes in order to promote cell recovery. Promotes the transcription of genes linked to amino acid sufficiency and resistance to oxidative stress to protect cells against metabolic consequences of ER oxidation. Activates the transcription of NLRP1, possibly in concert with other factors in response to ER stress. Activates the transcription of asparagine synthetase (ASNS) in response to amino acid deprivation or ER stress. However, when associated with DDIT3/CHOP, the transcriptional activation of the ASNS gene is inhibited in response to amino acid deprivation. Together with DDIT3/CHOP, mediates programmed cell death by promoting the expression of genes involved in cellular amino acid metabolic processes, mRNA translation and the terminal unfolded protein response (terminal UPR), a cellular response that elicits programmed cell death when ER stress is prolonged and unresolved. Activates the expression of COX7A2L/SCAF1 downstream of the EIF2AK3/PERK-mediated unfolded protein response, thereby promoting formation of respiratory chain supercomplexes and increasing mitochondrial oxidative phosphorylation. Together with DDIT3/CHOP, activates the transcription of the IRS-regulator TRIB3 and promotes ER stress-induced neuronal cell death by regulating the expression of BBC3/PUMA in response to ER stress. May cooperate with the UPR transcriptional regulator QRICH1 to regulate ER protein homeostasis which is critical for cell viability in response to ER stress. In the absence of stress, ATF4 translation is at low levels and it is required for normal metabolic processes such as embryonic lens formation, fetal liver hematopoiesis, bone development and synaptic plasticity. Acts as a regulator of osteoblast differentiation in response to phosphorylation by RPS6KA3/RSK2: phosphorylation in osteoblasts enhances transactivation activity and promotes expression of osteoblast-specific genes and post-transcriptionally regulates the synthesis of Type I collagen, the main constituent of the bone matrix. Cooperates with FOXO1 in osteoblasts to regulate glucose homeostasis through suppression of beta-cell production and decrease in insulin production. Activates transcription of SIRT4. Regulates the circadian expression of the core clock component PER2 and the serotonin transporter SLC6A4. Binds in a circadian time-dependent manner to the cAMP response elements (CRE) in the SLC6A4 and PER2 promoters and periodically activates the transcription of these genes. Mainly acts as a transcriptional activator in cellular stress adaptation, but it can also act as a transcriptional repressor: acts as a regulator of synaptic plasticity by repressing transcription, thereby inhibiting induction and maintenance of long-term memory. Regulates synaptic functions via interaction with DISC1 in neurons, which inhibits ATF4 transcription factor activity by disrupting ATF4 dimerization and DNA-binding. The sequence is that of Cyclic AMP-dependent transcription factor ATF-4 from Bos taurus (Bovine).